The chain runs to 362 residues: Chorismate synthase (362 aa).

Position 46 (Arg46) interacts with NADP(+). Residues 122–124 (RSS), 238–239 (NA), Gly278, 293–297 (KPTPS), and Arg319 each bind FMN.

This sequence belongs to the chorismate synthase family. As to quaternary structure, homotetramer. FMNH2 is required as a cofactor.

The catalysed reaction is 5-O-(1-carboxyvinyl)-3-phosphoshikimate = chorismate + phosphate. It participates in metabolic intermediate biosynthesis; chorismate biosynthesis; chorismate from D-erythrose 4-phosphate and phosphoenolpyruvate: step 7/7. Its function is as follows. Catalyzes the anti-1,4-elimination of the C-3 phosphate and the C-6 proR hydrogen from 5-enolpyruvylshikimate-3-phosphate (EPSP) to yield chorismate, which is the branch point compound that serves as the starting substrate for the three terminal pathways of aromatic amino acid biosynthesis. This reaction introduces a second double bond into the aromatic ring system. The sequence is that of Chorismate synthase from Campylobacter jejuni subsp. doylei (strain ATCC BAA-1458 / RM4099 / 269.97).